A 316-amino-acid polypeptide reads, in one-letter code: Methionyl-tRNA formyltransferase (316 aa).

117 to 120 (SLLP) serves as a coordination point for (6S)-5,6,7,8-tetrahydrofolate.

This sequence belongs to the Fmt family.

It carries out the reaction L-methionyl-tRNA(fMet) + (6R)-10-formyltetrahydrofolate = N-formyl-L-methionyl-tRNA(fMet) + (6S)-5,6,7,8-tetrahydrofolate + H(+). Its function is as follows. Attaches a formyl group to the free amino group of methionyl-tRNA(fMet). The formyl group appears to play a dual role in the initiator identity of N-formylmethionyl-tRNA by promoting its recognition by IF2 and preventing the misappropriation of this tRNA by the elongation apparatus. The sequence is that of Methionyl-tRNA formyltransferase from Janthinobacterium sp. (strain Marseille) (Minibacterium massiliensis).